The following is a 58-amino-acid chain: Dortoxin (58 aa).

One can recognise an LCN-type CS-alpha/beta domain in the interval 3-58 (VPGNYPLDKDGNTYTCLKLGENKDCQKVCKLHGVQYGYCYAFECWCKEYLDDKDSV). 3 cysteine pairs are disulfide-bonded: cysteine 18/cysteine 41, cysteine 27/cysteine 46, and cysteine 31/cysteine 48.

As to expression, expressed by the venom gland.

The protein resides in the secreted. Functionally, binds to sodium channels (Nav) and affects the channel activation process. In mice, causes hyperactivity that persists until death. The chain is Dortoxin from Parabuthus transvaalicus (Transvaal thick-tailed scorpion).